We begin with the raw amino-acid sequence, 123 residues long: Nitrogenase-stabilizing/protective protein NifW (123 aa).

This sequence belongs to the NifW family. In terms of assembly, homotrimer; associates with NifD.

In terms of biological role, may protect the nitrogenase Fe-Mo protein from oxidative damage. In Rhodopseudomonas palustris (strain HaA2), this protein is Nitrogenase-stabilizing/protective protein NifW.